Here is a 196-residue protein sequence, read N- to C-terminus: ATP-dependent Clp protease proteolytic subunit (196 aa).

Residue serine 101 is the Nucleophile of the active site. Residue histidine 126 is part of the active site.

This sequence belongs to the peptidase S14 family. As to quaternary structure, component of the chloroplastic Clp protease core complex.

It is found in the plastid. Its subcellular location is the chloroplast stroma. It catalyses the reaction Hydrolysis of proteins to small peptides in the presence of ATP and magnesium. alpha-casein is the usual test substrate. In the absence of ATP, only oligopeptides shorter than five residues are hydrolyzed (such as succinyl-Leu-Tyr-|-NHMec, and Leu-Tyr-Leu-|-Tyr-Trp, in which cleavage of the -Tyr-|-Leu- and -Tyr-|-Trp bonds also occurs).. Its function is as follows. Cleaves peptides in various proteins in a process that requires ATP hydrolysis. Has a chymotrypsin-like activity. Plays a major role in the degradation of misfolded proteins. This Vitis vinifera (Grape) protein is ATP-dependent Clp protease proteolytic subunit.